Consider the following 592-residue polypeptide: Arginine--tRNA ligase (592 aa).

The 'HIGH' region motif lies at 112–122 (VNPNKELHVGH).

It belongs to the class-I aminoacyl-tRNA synthetase family. In terms of assembly, monomer.

The protein localises to the cytoplasm. The catalysed reaction is tRNA(Arg) + L-arginine + ATP = L-arginyl-tRNA(Arg) + AMP + diphosphate. The sequence is that of Arginine--tRNA ligase from Thermus thermophilus (strain ATCC BAA-163 / DSM 7039 / HB27).